The following is a 352-amino-acid chain: RNA 3'-terminal phosphate cyclase (352 aa).

ATP-binding positions include Gln-100 and 297–301 (HLADQ). His-322 functions as the Tele-AMP-histidine intermediate in the catalytic mechanism.

This sequence belongs to the RNA 3'-terminal cyclase family. Type 1 subfamily.

Its subcellular location is the cytoplasm. The catalysed reaction is a 3'-end 3'-phospho-ribonucleotide-RNA + ATP = a 3'-end 2',3'-cyclophospho-ribonucleotide-RNA + AMP + diphosphate. In terms of biological role, catalyzes the conversion of 3'-phosphate to a 2',3'-cyclic phosphodiester at the end of RNA. The mechanism of action of the enzyme occurs in 3 steps: (A) adenylation of the enzyme by ATP; (B) transfer of adenylate to an RNA-N3'P to produce RNA-N3'PP5'A; (C) and attack of the adjacent 2'-hydroxyl on the 3'-phosphorus in the diester linkage to produce the cyclic end product. The biological role of this enzyme is unknown but it is likely to function in some aspects of cellular RNA processing. In Methanosarcina mazei (strain ATCC BAA-159 / DSM 3647 / Goe1 / Go1 / JCM 11833 / OCM 88) (Methanosarcina frisia), this protein is RNA 3'-terminal phosphate cyclase.